A 273-amino-acid polypeptide reads, in one-letter code: WIMGYMVNAIYQIDEFVNLGANSIETDVSFDDNANPEYTYHGIPCDCGRSCLKWENYNDFLKGLRSATTPGNSKYQSKLILVVFDLKTGSLYDNQASEAGKKLAKNLLKHYWNNGNNGGRAYIVLSIPDLNHYPLIKGFTDTLKQEGHPELLEKVGYDFSGNDAIGDVAKAYKKAGVSGHVWQSDGITNCLLRGLSRVKDAVANRDSGKGYINKVYYWTVDKRATTRDALDAGVDGVMTNYPDVIADVMNEAAYKNKVRLATYEDSPWVTFKK.

Positions 25 and 27 each coordinate Mg(2+). His41 acts as the Nucleophile in catalysis. Intrachain disulfides connect Cys45-Cys51 and Cys47-Cys190. Residue Asp85 participates in Mg(2+) binding.

This sequence belongs to the arthropod phospholipase D family. Class II subfamily. It depends on Mg(2+) as a cofactor. In terms of tissue distribution, expressed by the venom gland.

It is found in the secreted. The enzyme catalyses an N-(acyl)-sphingosylphosphocholine = an N-(acyl)-sphingosyl-1,3-cyclic phosphate + choline. It carries out the reaction an N-(acyl)-sphingosylphosphoethanolamine = an N-(acyl)-sphingosyl-1,3-cyclic phosphate + ethanolamine. The catalysed reaction is a 1-acyl-sn-glycero-3-phosphocholine = a 1-acyl-sn-glycero-2,3-cyclic phosphate + choline. It catalyses the reaction a 1-acyl-sn-glycero-3-phosphoethanolamine = a 1-acyl-sn-glycero-2,3-cyclic phosphate + ethanolamine. Dermonecrotic toxins cleave the phosphodiester linkage between the phosphate and headgroup of certain phospholipids (sphingolipid and lysolipid substrates), forming an alcohol (often choline) and a cyclic phosphate. This toxin acts on sphingomyelin (SM). It may also act on ceramide phosphoethanolamine (CPE), lysophosphatidylcholine (LPC) and lysophosphatidylethanolamine (LPE), but not on lysophosphatidylserine (LPS), and lysophosphatidylglycerol (LPG). It acts by transphosphatidylation, releasing exclusively cyclic phosphate products as second products. Induces dermonecrosis, hemolysis, increased vascular permeability, edema, inflammatory response, and platelet aggregation. The sequence is that of Dermonecrotic toxin LhSicTox-alphaIA2bi from Loxosceles hirsuta (Recluse spider).